Here is a 335-residue protein sequence, read N- to C-terminus: Holliday junction branch migration complex subunit RuvB (335 aa).

Residues 1–183 (MDERIISSET…FGVIDHLEFY (183 aa)) form a large ATPase domain (RuvB-L) region. Residues leucine 22, arginine 23, glycine 64, lysine 67, threonine 68, threonine 69, 130–132 (EDY), arginine 173, tyrosine 183, and arginine 220 each bind ATP. Threonine 68 is a binding site for Mg(2+). The segment at 184-254 (TEEQLTEIVL…LAKEALTLLQ (71 aa)) is small ATPAse domain (RuvB-S). A head domain (RuvB-H) region spans residues 257 to 335 (PRGLDTIDQK…HLGISYEKEV (79 aa)). 3 residues coordinate DNA: arginine 293, arginine 312, and arginine 317.

The protein belongs to the RuvB family. In terms of assembly, homohexamer. Forms an RuvA(8)-RuvB(12)-Holliday junction (HJ) complex. HJ DNA is sandwiched between 2 RuvA tetramers; dsDNA enters through RuvA and exits via RuvB. An RuvB hexamer assembles on each DNA strand where it exits the tetramer. Each RuvB hexamer is contacted by two RuvA subunits (via domain III) on 2 adjacent RuvB subunits; this complex drives branch migration. In the full resolvosome a probable DNA-RuvA(4)-RuvB(12)-RuvC(2) complex forms which resolves the HJ.

It is found in the cytoplasm. The enzyme catalyses ATP + H2O = ADP + phosphate + H(+). Functionally, the RuvA-RuvB-RuvC complex processes Holliday junction (HJ) DNA during genetic recombination and DNA repair, while the RuvA-RuvB complex plays an important role in the rescue of blocked DNA replication forks via replication fork reversal (RFR). RuvA specifically binds to HJ cruciform DNA, conferring on it an open structure. The RuvB hexamer acts as an ATP-dependent pump, pulling dsDNA into and through the RuvAB complex. RuvB forms 2 homohexamers on either side of HJ DNA bound by 1 or 2 RuvA tetramers; 4 subunits per hexamer contact DNA at a time. Coordinated motions by a converter formed by DNA-disengaged RuvB subunits stimulates ATP hydrolysis and nucleotide exchange. Immobilization of the converter enables RuvB to convert the ATP-contained energy into a lever motion, pulling 2 nucleotides of DNA out of the RuvA tetramer per ATP hydrolyzed, thus driving DNA branch migration. The RuvB motors rotate together with the DNA substrate, which together with the progressing nucleotide cycle form the mechanistic basis for DNA recombination by continuous HJ branch migration. Branch migration allows RuvC to scan DNA until it finds its consensus sequence, where it cleaves and resolves cruciform DNA. This chain is Holliday junction branch migration complex subunit RuvB, found in Listeria innocua serovar 6a (strain ATCC BAA-680 / CLIP 11262).